Here is a 160-residue protein sequence, read N- to C-terminus: Small ribosomal subunit protein uS7 (160 aa).

It belongs to the universal ribosomal protein uS7 family. Part of the 30S ribosomal subunit. Contacts proteins S9 and S11.

One of the primary rRNA binding proteins, it binds directly to 16S rRNA where it nucleates assembly of the head domain of the 30S subunit. Is located at the subunit interface close to the decoding center, probably blocks exit of the E-site tRNA. The protein is Small ribosomal subunit protein uS7 of Rickettsia canadensis (strain McKiel).